A 169-amino-acid polypeptide reads, in one-letter code: Photosystem I assembly protein Ycf3 (169 aa).

TPR repeat units follow at residues 36–69 (AFTY…EIDP), 73–106 (SYIL…NPFL), and 121–154 (GEQA…TPGN).

Belongs to the Ycf3 family.

It is found in the plastid. The protein localises to the chloroplast thylakoid membrane. Functionally, essential for the assembly of the photosystem I (PSI) complex. May act as a chaperone-like factor to guide the assembly of the PSI subunits. The protein is Photosystem I assembly protein Ycf3 of Cucumis sativus (Cucumber).